A 225-amino-acid chain; its full sequence is NAD(P)H-quinone oxidoreductase subunit K, chloroplastic (225 aa).

The [4Fe-4S] cluster site is built by C43, C44, C108, and C139.

The protein belongs to the complex I 20 kDa subunit family. As to quaternary structure, NDH is composed of at least 16 different subunits, 5 of which are encoded in the nucleus. [4Fe-4S] cluster is required as a cofactor.

Its subcellular location is the plastid. It localises to the chloroplast thylakoid membrane. The catalysed reaction is a plastoquinone + NADH + (n+1) H(+)(in) = a plastoquinol + NAD(+) + n H(+)(out). It catalyses the reaction a plastoquinone + NADPH + (n+1) H(+)(in) = a plastoquinol + NADP(+) + n H(+)(out). NDH shuttles electrons from NAD(P)H:plastoquinone, via FMN and iron-sulfur (Fe-S) centers, to quinones in the photosynthetic chain and possibly in a chloroplast respiratory chain. The immediate electron acceptor for the enzyme in this species is believed to be plastoquinone. Couples the redox reaction to proton translocation, and thus conserves the redox energy in a proton gradient. This chain is NAD(P)H-quinone oxidoreductase subunit K, chloroplastic, found in Atropa belladonna (Belladonna).